A 631-amino-acid chain; its full sequence is MTPALTALLCLGLSLGPRTRVQAGPFPKPTLWAEPGSVISWGSPVTIWCQGSQEAQEYRLHKEGSPEPLDRNNPLEPKNKARFSIPSMTEHHAGRYRCHYYSSAGWSEPSDPLEMVMTGAYSKPTLSALPSPVVASGGNMTLRCGSQKGYHHFVLMKEGEHQLPRTLDSQQLHSRGFQALFPVGPVTPSHRWRFTCYYYYTNTPWVWSHPSDPLEILPSGVSRKPSLLTLQGPVLAPGQSLTLQCGSDVGYNRFVLYKEGERDFLQRPGQQPQAGLSQANFTLGPVSPSNGGQYRCYGAHNLSSEWSAPSDPLNILMAGQIYDTVSLSAQPGPTVASGENVTLLCQSWWQFDTFLLTKEGAAHPPLRLRSMYGAHKYQAEFPMSPVTSAHAGTYRCYGSYSSNPHLLSHPSEPLELVVSGHSGGSSLPPTGPPSTPGLGRYLEVLIGVSVAFVLLLFLLLFLLLRRQRHSKHRTSDQRKTDFQRPAGAAETEPKDRGLLRRSSPAADVQEENLYAAVKDTQSEDRVELDSQSPHDEDPQAVTYAPVKHSSPRREMASPPSSLSGEFLDTKDRQVEEDRQMDTEAAASEASQDVTYAQLHSLTLRRKATEPPPSQEGEPPAEPSIYATLAIH.

A signal peptide spans methionine 1 to alanine 23. Over glycine 24–glutamate 443 the chain is Extracellular. Ig-like C2-type domains lie at glycine 42–tyrosine 100, aspartate 111–threonine 229, proline 225–asparagine 314, and glycine 338–serine 419. Cysteine 49 and cysteine 98 form a disulfide bridge. Residues arginine 59–aspartate 70 are compositionally biased toward basic and acidic residues. Residues arginine 59 to lysine 78 are disordered. The N-linked (GlcNAc...) asparagine glycan is linked to asparagine 139. 2 cysteine pairs are disulfide-bonded: cysteine 144-cysteine 196 and cysteine 245-cysteine 296. 3 N-linked (GlcNAc...) asparagine glycosylation sites follow: asparagine 280, asparagine 301, and asparagine 340. A disulfide bridge links cysteine 345 with cysteine 396. A helical membrane pass occupies residues valine 444–leucine 464. Residues arginine 465 to histidine 631 lie on the Cytoplasmic side of the membrane. The interval serine 470–histidine 631 is disordered. The span at arginine 473 to phenylalanine 482 shows a compositional bias: basic and acidic residues. Residues asparagine 512–valine 517 carry the ITIM motif 1 motif. Basic and acidic residues-rich tracts occupy residues threonine 520–aspartate 537 and leucine 567–aspartate 581. Over residues glutamate 588 to serine 600 the composition is skewed to polar residues. 2 short sequence motifs (ITIM motif) span residues valine 593–leucine 598 and serine 623–leucine 628. Phosphotyrosine; by LYN is present on residues tyrosine 595 and tyrosine 625.

As to quaternary structure, interacts with LYN, PTPN6/SHP-1 and PTPN11/SHP-2. In terms of processing, phosphorylated on tyrosine residues by LYN. Phosphorylation at Tyr-595 and Tyr-625 is important for interaction with PTPN6/SHP-1 and PTPN11/SHP-2. As to expression, detected in monocytes and B-cells.

It is found in the cell membrane. Its function is as follows. May act as receptor for class I MHC antigens. Becomes activated upon coligation of LILRB3 and immune receptors, such as FCGR2B and the B-cell receptor. Down-regulates antigen-induced B-cell activation by recruiting phosphatases to its immunoreceptor tyrosine-based inhibitor motifs (ITIM). This is Leukocyte immunoglobulin-like receptor subfamily B member 3 (LILRB3) from Homo sapiens (Human).